Reading from the N-terminus, the 505-residue chain is Ribose import ATP-binding protein RbsA 1 (505 aa).

2 ABC transporter domains span residues 13-249 (LALR…VGRD) and 254-503 (YPKQ…TGRA). 45–52 (GENGAGKS) is a binding site for ATP.

This sequence belongs to the ABC transporter superfamily. Ribose importer (TC 3.A.1.2.1) family. The complex is composed of an ATP-binding protein (RbsA), two transmembrane proteins (RbsC) and a solute-binding protein (RbsB).

Its subcellular location is the cell membrane. The enzyme catalyses D-ribose(out) + ATP + H2O = D-ribose(in) + ADP + phosphate + H(+). In terms of biological role, part of the ABC transporter complex RbsABC involved in ribose import. Responsible for energy coupling to the transport system. The polypeptide is Ribose import ATP-binding protein RbsA 1 (Streptomyces coelicolor (strain ATCC BAA-471 / A3(2) / M145)).